The chain runs to 257 residues: Glutamate racemase (257 aa).

Residues aspartate 12 to serine 13 and tyrosine 44 to glycine 45 contribute to the substrate site. The active-site Proton donor/acceptor is the cysteine 75. Substrate is bound at residue asparagine 76–threonine 77. Cysteine 176 (proton donor/acceptor) is an active-site residue. Threonine 177–histidine 178 provides a ligand contact to substrate.

Belongs to the aspartate/glutamate racemases family.

The catalysed reaction is L-glutamate = D-glutamate. Its pathway is cell wall biogenesis; peptidoglycan biosynthesis. Its function is as follows. Provides the (R)-glutamate required for cell wall biosynthesis. This Thermus thermophilus (strain ATCC 27634 / DSM 579 / HB8) protein is Glutamate racemase.